The following is a 196-amino-acid chain: Small ribosomal subunit protein uS4c (196 aa).

The disordered stretch occupies residues 17 to 36 (ALPGLTRKTPKSGSNLKKKF). The region spanning 89–150 (MRLDNILFRL…NQRSKRLIQN (62 aa)) is the S4 RNA-binding domain.

The protein belongs to the universal ribosomal protein uS4 family. In terms of assembly, part of the 30S ribosomal subunit. Contacts protein S5. The interaction surface between S4 and S5 is involved in control of translational fidelity.

It is found in the plastid. It localises to the chloroplast. One of the primary rRNA binding proteins, it binds directly to 16S rRNA where it nucleates assembly of the body of the 30S subunit. Its function is as follows. With S5 and S12 plays an important role in translational accuracy. The sequence is that of Small ribosomal subunit protein uS4c (rps4) from Phyllostachys flexuosa (Drooping timber bamboo).